The primary structure comprises 388 residues: Probable tRNA sulfurtransferase (388 aa).

The region spanning 55–162 (VTLDDKLKKI…PEGVLIFTDR (108 aa)) is the THUMP domain. ATP-binding positions include 180–181 (LL), 205–206 (TF), R264, G286, and Q295.

Belongs to the ThiI family.

The protein localises to the cytoplasm. The catalysed reaction is [ThiI sulfur-carrier protein]-S-sulfanyl-L-cysteine + a uridine in tRNA + 2 reduced [2Fe-2S]-[ferredoxin] + ATP + H(+) = [ThiI sulfur-carrier protein]-L-cysteine + a 4-thiouridine in tRNA + 2 oxidized [2Fe-2S]-[ferredoxin] + AMP + diphosphate. The enzyme catalyses [ThiS sulfur-carrier protein]-C-terminal Gly-Gly-AMP + S-sulfanyl-L-cysteinyl-[cysteine desulfurase] + AH2 = [ThiS sulfur-carrier protein]-C-terminal-Gly-aminoethanethioate + L-cysteinyl-[cysteine desulfurase] + A + AMP + 2 H(+). Its pathway is cofactor biosynthesis; thiamine diphosphate biosynthesis. Its function is as follows. Catalyzes the ATP-dependent transfer of a sulfur to tRNA to produce 4-thiouridine in position 8 of tRNAs, which functions as a near-UV photosensor. Also catalyzes the transfer of sulfur to the sulfur carrier protein ThiS, forming ThiS-thiocarboxylate. This is a step in the synthesis of thiazole, in the thiamine biosynthesis pathway. The sulfur is donated as persulfide by IscS. This is Probable tRNA sulfurtransferase from Thermotoga maritima (strain ATCC 43589 / DSM 3109 / JCM 10099 / NBRC 100826 / MSB8).